The following is a 223-amino-acid chain: Probable transaldolase (223 aa).

Catalysis depends on Lys-86, which acts as the Schiff-base intermediate with substrate.

This sequence belongs to the transaldolase family. Type 3B subfamily.

The protein localises to the cytoplasm. It carries out the reaction D-sedoheptulose 7-phosphate + D-glyceraldehyde 3-phosphate = D-erythrose 4-phosphate + beta-D-fructose 6-phosphate. The protein operates within carbohydrate degradation; pentose phosphate pathway; D-glyceraldehyde 3-phosphate and beta-D-fructose 6-phosphate from D-ribose 5-phosphate and D-xylulose 5-phosphate (non-oxidative stage): step 2/3. In terms of biological role, transaldolase is important for the balance of metabolites in the pentose-phosphate pathway. The sequence is that of Probable transaldolase (tal) from Thermoplasma volcanium (strain ATCC 51530 / DSM 4299 / JCM 9571 / NBRC 15438 / GSS1).